The chain runs to 162 residues: Small ribosomal subunit protein uS7m (162 aa).

Belongs to the universal ribosomal protein uS7 family. As to quaternary structure, part of the small ribosomal subunit.

It localises to the mitochondrion. One of the primary rRNA binding proteins, it binds directly to 16S-like rRNA where it nucleates assembly of the head domain of the small subunit. This Dictyostelium discoideum (Social amoeba) protein is Small ribosomal subunit protein uS7m (mrps7).